The primary structure comprises 1216 residues: Metabotropic glycine receptor (1216 aa).

A signal peptide spans 1 to 23 (MGVMAYPFLFCLLLVHFGLGAIG). Residues 24–417 (ASREAPSRPD…CFVQEDKYLR (394 aa)) lie on the Extracellular side of the membrane. A disordered region spans residues 25–65 (SREAPSRPDPPRERTLRAKQHAQQPARASASDPSAPWSRST). Positions 28-40 (APSRPDPPRERTL) are enriched in basic and acidic residues. Residues 46–64 (AQQPARASASDPSAPWSRS) show a composition bias toward low complexity. The interval 85–281 (YLYTGDSHKL…CENGSYKPGW (197 aa)) is cache-like region. 2 N-linked (GlcNAc...) asparagine glycosylation sites follow: Asn98 and Asn143. Cysteines 99 and 272 form a disulfide. Residues Ser172 and Arg173 each contribute to the glycine site. Residue Asn215 is glycosylated (N-linked (GlcNAc...) asparagine). Glycine is bound at residue Glu271. Asn274 carries an N-linked (GlcNAc...) asparagine glycan. Asp307 serves as a coordination point for glycine. N-linked (GlcNAc...) asparagine glycosylation is present at Asn333. The helical transmembrane segment at 418–439 (LAIISFQALCMLLDFLSMLVVY) threads the bilayer. The Cytoplasmic portion of the chain corresponds to 440–451 (RFRKAKSIRASG). Residues 452-474 (LILLETILFGSLLLYFPVVILYF) traverse the membrane as a helical segment. Residues 475-478 (EPST) lie on the Extracellular side of the membrane. Residues 479–501 (FRCILLRWVRLLGFATVYGTVTL) form a helical membrane-spanning segment. Cys481 and Cys573 are disulfide-bonded. The Cytoplasmic portion of the chain corresponds to 502–525 (KLHRVLKVFLSRTAQRIPYMTGGR). Residues 526–547 (VMRMLAVILLVVFWFLVGWTSS) form a helical membrane-spanning segment. Residues 548-576 (VCQNLERHISLIGQGRTSDHLIFSMCLVE) lie on the Extracellular side of the membrane. Residues 577–597 (RWDYMTAAAEFLFLLWGVYLC) form a helical membrane-spanning segment. The Cytoplasmic portion of the chain corresponds to 598–611 (YAVRTVPSAFHEPR). The chain crosses the membrane as a helical span at residues 612 to 633 (YMAVAVHNELIISAIFHTIRFV). Over 634–642 (LASRLQSDW) the chain is Extracellular. Residues 643 to 664 (MLMLYFAHTHLTVTVTIGLLLI) form a helical membrane-spanning segment. Residues 665–1216 (PKFSHSSNNP…NEEVRLARKV (552 aa)) are Cytoplasmic-facing. 3 positions are modified to phosphoserine: Ser694, Ser705, and Ser708. Disordered stretches follow at residues 757–875 (RITE…ESVP) and 911–1000 (KEKT…HMKD). The segment covering 769–781 (CSKEDKDGGEHGS) has biased composition (basic and acidic residues). Residue Lys774 forms a Glycyl lysine isopeptide (Lys-Gly) (interchain with G-Cter in ubiquitin) linkage. Positions 864–873 (EDSQAVSTES) are enriched in polar residues. Residue Ser866 is modified to Phosphoserine. Residues 926-944 (VEERAKAQKALPRERETNR) are compositionally biased toward basic and acidic residues. Composition is skewed to polar residues over residues 945-963 (KYSNSDNAETQDSAPPNSS) and 980-991 (QRANPTTANSDL). Ser947 carries the phosphoserine modification. The short motif at 1007–1011 (VCPWE) is the VCPWE motif 1 element. The disordered stretch occupies residues 1038–1072 (ERNPTFSLKEKSHPKPKAADLCQQSNPKSVDKAEV). Ser1066 bears the Phosphoserine mark. Positions 1072–1076 (VCPWE) match the VCPWE motif 2 motif. At Ser1081 the chain carries Phosphoserine. The tract at residues 1128 to 1167 (SKVENENLNQLGEQEKKTSSSERNVPDSHNSSNNFQPPLM) is disordered. Residues 1140 to 1153 (EQEKKTSSSERNVP) show a composition bias toward basic and acidic residues. Residues 1154-1163 (DSHNSSNNFQ) show a composition bias toward polar residues. Positions 1172 to 1176 (VCPWE) match the VCPWE motif 3 motif.

Belongs to the G-protein coupled receptor 3 family. In terms of assembly, homodimer. Associates with the RGS7-GNB5 complex, promoting its localization to the cell membrane and regulating its GTPase activator activity. Interacts (via VCPWE motifs) with GNAO1. Interacts with GPC4. Interacts with EGFLAM.

Its subcellular location is the cell membrane. The protein resides in the postsynaptic cell membrane. It localises to the presynaptic cell membrane. It is found in the nucleus. Metabotropic receptor for glycine that controls synapse formation and function in the brain. Acts as an atypical G-protein coupled receptor that recruits and regulates the RGS7-GNB5 complex instead of activating G proteins. In absence of glycine ligand, promotes the GTPase activator activity of RGS7, increasing the GTPase activity of G protein alpha subunits, thereby driving them into their inactive GDP-bound form. Glycine-binding changes the conformation of the intracellular surface, inhibiting the GTPase activator activity of the RGS7-GNB5 complex, promoting G protein alpha subunits into their active GTP-bound form and regulating cAMP levels. Also able to bind taurine, a compound closely related to glycine, but with a two-fold lower affinity. Glycine receptor-dependent regulation of cAMP controls key ion channels, kinases and neurotrophic factors involved in neuronal excitability and synaptic transmission. Plays a pivotal role in regulating mood and cognition via its ability to regulate neuronal excitability in L2/L3 pyramidal neurons of the prefrontal cortex. Also involved in spatial learning by regulating hippocampal CA1 neuronal excitability. Acts as a synaptic organizer in the hippocampus, required for proper mossy fiber-CA3 neurocircuitry establishment, structure and function: induces presynaptic differentiation in contacting axons via its interaction with GPC4. In addition to glycine, may also act as a receptor for osteocalcin (BGLAP) hormone: osteocalcin-binding initiates a signaling response that prevents neuronal apoptosis in the hippocampus and regulates the synthesis of neurotransmitters. The chain is Metabotropic glycine receptor (GPR158) from Bos taurus (Bovine).